We begin with the raw amino-acid sequence, 397 residues long: Enoyl-[acyl-carrier-protein] reductase [NADH] (397 aa).

NAD(+)-binding positions include 47 to 52, 73 to 74, 110 to 111, and 138 to 139; these read GASTGY, LE, DA, and LA. Tyrosine 224 provides a ligand contact to substrate. Tyrosine 234 serves as the catalytic Proton donor. NAD(+) contacts are provided by residues lysine 243 and 272–274; that span reads LVT.

The protein belongs to the TER reductase family. As to quaternary structure, monomer.

The catalysed reaction is a 2,3-saturated acyl-[ACP] + NAD(+) = a (2E)-enoyl-[ACP] + NADH + H(+). The protein operates within lipid metabolism; fatty acid biosynthesis. Its function is as follows. Involved in the final reduction of the elongation cycle of fatty acid synthesis (FAS II). Catalyzes the reduction of a carbon-carbon double bond in an enoyl moiety that is covalently linked to an acyl carrier protein (ACP). The polypeptide is Enoyl-[acyl-carrier-protein] reductase [NADH] (Methylobacillus flagellatus (strain ATCC 51484 / DSM 6875 / VKM B-1610 / KT)).